A 237-amino-acid polypeptide reads, in one-letter code: DNA repair protein RecO (237 aa).

It belongs to the RecO family.

Functionally, involved in DNA repair and RecF pathway recombination. The sequence is that of DNA repair protein RecO from Flavobacterium johnsoniae (strain ATCC 17061 / DSM 2064 / JCM 8514 / BCRC 14874 / CCUG 350202 / NBRC 14942 / NCIMB 11054 / UW101) (Cytophaga johnsonae).